The primary structure comprises 281 residues: Pantothenate synthetase (281 aa).

Position 30-37 (30-37 (MGYLHEGH)) interacts with ATP. H37 (proton donor) is an active-site residue. A (R)-pantoate-binding site is contributed by Q61. Q61 is a beta-alanine binding site. Residue 147–150 (GEKD) participates in ATP binding. Q153 is a binding site for (R)-pantoate. Residues I176 and 184–187 (KSSR) contribute to the ATP site.

Belongs to the pantothenate synthetase family. As to quaternary structure, homodimer.

It is found in the cytoplasm. The enzyme catalyses (R)-pantoate + beta-alanine + ATP = (R)-pantothenate + AMP + diphosphate + H(+). It participates in cofactor biosynthesis; (R)-pantothenate biosynthesis; (R)-pantothenate from (R)-pantoate and beta-alanine: step 1/1. Functionally, catalyzes the condensation of pantoate with beta-alanine in an ATP-dependent reaction via a pantoyl-adenylate intermediate. The sequence is that of Pantothenate synthetase from Clostridium botulinum (strain ATCC 19397 / Type A).